The sequence spans 354 residues: Rhodopsin (354 aa).

Over 1–36 the chain is Extracellular; that stretch reads MNGTEGENFYIPMSNKTGVVRSPFDYPQYYLAEPWK. N2 and N15 each carry an N-linked (GlcNAc...) asparagine glycan. A helical membrane pass occupies residues 37–61; the sequence is FSVLAAYMFFLIIAGFPVNFLTLYV. Residues 62 to 73 lie on the Cytoplasmic side of the membrane; that stretch reads TIQHKKLRQPLN. Residues 74–96 form a helical membrane-spanning segment; it reads YILLNLAVADLFMIFGGFPSTMI. The Extracellular segment spans residues 97 to 110; that stretch reads TSMNGYFVFGPSGC. C110 and C187 are joined by a disulfide. The chain crosses the membrane as a helical span at residues 111–133; the sequence is NFEGFFATLGGEIGLWSLVVLAI. A 'Ionic lock' involved in activated form stabilization motif is present at residues 134 to 136; sequence ERY. At 134 to 152 the chain is on the cytoplasmic side; that stretch reads ERYVVVCKPMSNFRFGSQH. The chain crosses the membrane as a helical span at residues 153–173; sequence AFMGVGLTWIMAMACAFPPLV. Over 174–202 the chain is Extracellular; it reads GWSRYIPEGMQCSCGIDYYTLKPEVNNES. N200 is a glycosylation site (N-linked (GlcNAc...) asparagine). The chain crosses the membrane as a helical span at residues 203–224; sequence FVIYMFVVHFSIPLTIIFFCYG. The Cytoplasmic portion of the chain corresponds to 225 to 252; it reads RLVCTVKEAAAQQQESETTQRAEREVTR. The chain crosses the membrane as a helical span at residues 253 to 274; the sequence is MVIIMVIAFLICWLPYASVAFF. Residues 275–286 are Extracellular-facing; sequence IFCNQGSEFGPI. A helical membrane pass occupies residues 287–308; that stretch reads FMTIPAFFAKAASLYNPLIYIL. K296 carries the post-translational modification N6-(retinylidene)lysine. The Cytoplasmic segment spans residues 309–354; sequence MNKQFRNCMITTICCGKNPFEEEESTSASASKTEASSVSSSQVAPA. 2 S-palmitoyl cysteine lipidation sites follow: C322 and C323. The tract at residues 333 to 354 is disordered; the sequence is STSASASKTEASSVSSSQVAPA. The span at 334–354 shows a compositional bias: low complexity; it reads TSASASKTEASSVSSSQVAPA.

This sequence belongs to the G-protein coupled receptor 1 family. Opsin subfamily. Phosphorylated on some or all of the serine and threonine residues present in the C-terminal region. In terms of processing, contains one covalently linked retinal chromophore.

It is found in the membrane. It localises to the cell projection. The protein localises to the cilium. The protein resides in the photoreceptor outer segment. Its function is as follows. Photoreceptor required for image-forming vision at low light intensity. While most salt water fish species use retinal as chromophore, most freshwater fish use 3-dehydroretinal, or a mixture of retinal and 3-dehydroretinal. Light-induced isomerization of 11-cis to all-trans retinal triggers a conformational change that activates signaling via G-proteins. Subsequent receptor phosphorylation mediates displacement of the bound G-protein alpha subunit by arrestin and terminates signaling. The polypeptide is Rhodopsin (rho) (Scyliorhinus canicula (Small-spotted catshark)).